The primary structure comprises 285 residues: Acetyl-coenzyme A carboxylase carboxyl transferase subunit beta (285 aa).

The CoA carboxyltransferase N-terminal domain maps to 29-285; that stretch reads IMTKCPKCKK…ILKIHQEVTK (257 aa). Positions 33, 36, 52, and 55 each coordinate Zn(2+). A C4-type zinc finger spans residues 33-55; sequence CPKCKKIMYTKELAENLNVCFNC.

Belongs to the AccD/PCCB family. As to quaternary structure, acetyl-CoA carboxylase is a heterohexamer composed of biotin carboxyl carrier protein (AccB), biotin carboxylase (AccC) and two subunits each of ACCase subunit alpha (AccA) and ACCase subunit beta (AccD). It depends on Zn(2+) as a cofactor.

It localises to the cytoplasm. The catalysed reaction is N(6)-carboxybiotinyl-L-lysyl-[protein] + acetyl-CoA = N(6)-biotinyl-L-lysyl-[protein] + malonyl-CoA. It participates in lipid metabolism; malonyl-CoA biosynthesis; malonyl-CoA from acetyl-CoA: step 1/1. Its function is as follows. Component of the acetyl coenzyme A carboxylase (ACC) complex. Biotin carboxylase (BC) catalyzes the carboxylation of biotin on its carrier protein (BCCP) and then the CO(2) group is transferred by the transcarboxylase to acetyl-CoA to form malonyl-CoA. This Staphylococcus aureus (strain Newman) protein is Acetyl-coenzyme A carboxylase carboxyl transferase subunit beta.